The following is a 494-amino-acid chain: Cytochrome P450 2B11 (494 aa).

Residue Ser128 is modified to Phosphoserine; by PKA. Cys436 serves as a coordination point for heme.

Belongs to the cytochrome P450 family. Heme serves as cofactor.

The protein localises to the endoplasmic reticulum membrane. Its subcellular location is the microsome membrane. The catalysed reaction is an organic molecule + reduced [NADPH--hemoprotein reductase] + O2 = an alcohol + oxidized [NADPH--hemoprotein reductase] + H2O + H(+). Cytochromes P450 are a group of heme-thiolate monooxygenases. In liver microsomes, this enzyme is involved in an NADPH-dependent electron transport pathway. This isozyme seems responsible for metabolism of 2,2',4,4',5,5'-hexachlorobiphenyl. This Canis lupus familiaris (Dog) protein is Cytochrome P450 2B11 (CYP2B11).